The chain runs to 976 residues: Probable outer membrane protein PmpA (976 aa).

The first 50 residues, 1–50 (MNQVIKTIALCYQKYISRASNKTFSIHNTLSLSLLPKCLLGSLIIYTSHA), serve as a signal peptide directing secretion. The 306-residue stretch at 671-976 (GNAIPNSLWS…SLSCGGYVGF (306 aa)) folds into the Autotransporter domain.

The protein belongs to the PMP outer membrane protein family.

The protein resides in the secreted. The protein localises to the cell wall. It is found in the cell outer membrane. This Chlamydia muridarum (strain MoPn / Nigg) protein is Probable outer membrane protein PmpA (pmpA).